A 206-amino-acid polypeptide reads, in one-letter code: TPR repeat-containing protein YrrB (206 aa).

6 TPR repeats span residues 1-23, 24-57, 59-91, 93-125, 127-159, and 160-193; these read MQEG…NKED, AIPY…DSSA, TAYY…GMEN, DLFY…NEND, EARF…DPGH, and ADAF…QPDH.

As to quaternary structure, monomer.

In terms of biological role, could be an interacting mediator in the complex formation among RNA sulfuration components, RNA processing components, and aminoacyl-tRNA synthetases. In Bacillus subtilis (strain 168), this protein is TPR repeat-containing protein YrrB (yrrB).